Reading from the N-terminus, the 261-residue chain is 5'-nucleotidase SurE (261 aa).

A divalent metal cation-binding residues include D8, D9, S40, and N94.

The protein belongs to the SurE nucleotidase family. A divalent metal cation serves as cofactor.

It is found in the cytoplasm. It catalyses the reaction a ribonucleoside 5'-phosphate + H2O = a ribonucleoside + phosphate. Functionally, nucleotidase that shows phosphatase activity on nucleoside 5'-monophosphates. This Anaplasma marginale (strain Florida) protein is 5'-nucleotidase SurE.